Reading from the N-terminus, the 102-residue chain is Integration host factor subunit alpha (102 aa).

The tract at residues 49–71 is disordered; that stretch reads FGNFQLRTKPQRPGRNPKTGEEI.

This sequence belongs to the bacterial histone-like protein family. As to quaternary structure, heterodimer of an alpha and a beta chain.

Functionally, this protein is one of the two subunits of integration host factor, a specific DNA-binding protein that functions in genetic recombination as well as in transcriptional and translational control. In Nitrosomonas eutropha (strain DSM 101675 / C91 / Nm57), this protein is Integration host factor subunit alpha.